We begin with the raw amino-acid sequence, 292 residues long: RWD domain-containing protein 2A (292 aa).

One can recognise an RWD domain in the interval L14–Y134.

In Macaca fascicularis (Crab-eating macaque), this protein is RWD domain-containing protein 2A (RWDD2A).